The sequence spans 753 residues: 5-methyltetrahydropteroyltriglutamate--homocysteine methyltransferase (753 aa).

5-methyltetrahydropteroyltri-L-glutamate contacts are provided by residues 17-20 (RELK) and K117. Residues 431 to 433 (IGS) and E484 contribute to the L-homocysteine site. Residues 431 to 433 (IGS) and E484 each bind L-methionine. 5-methyltetrahydropteroyltri-L-glutamate contacts are provided by residues 515-516 (RC) and W561. D599 is a binding site for L-homocysteine. L-methionine is bound at residue D599. E605 lines the 5-methyltetrahydropteroyltri-L-glutamate pocket. Zn(2+) is bound by residues H641, C643, and E665. The active-site Proton donor is H694. C726 lines the Zn(2+) pocket.

This sequence belongs to the vitamin-B12 independent methionine synthase family. Requires Zn(2+) as cofactor.

It carries out the reaction 5-methyltetrahydropteroyltri-L-glutamate + L-homocysteine = tetrahydropteroyltri-L-glutamate + L-methionine. It participates in amino-acid biosynthesis; L-methionine biosynthesis via de novo pathway; L-methionine from L-homocysteine (MetE route): step 1/1. Its function is as follows. Catalyzes the transfer of a methyl group from 5-methyltetrahydrofolate to homocysteine resulting in methionine formation. This Escherichia coli O139:H28 (strain E24377A / ETEC) protein is 5-methyltetrahydropteroyltriglutamate--homocysteine methyltransferase.